The primary structure comprises 776 residues: Protein translocase subunit SecA 2 (776 aa).

Residues glutamine 80, 98-102 (GEGKT), and aspartate 486 contribute to the ATP site.

Belongs to the SecA family. As to quaternary structure, monomer and homodimer. Part of the essential Sec protein translocation apparatus which comprises SecA, SecYEG and auxiliary proteins SecDF. Other proteins may also be involved.

It localises to the cell membrane. It is found in the cytoplasm. The enzyme catalyses ATP + H2O + cellular proteinSide 1 = ADP + phosphate + cellular proteinSide 2.. Functionally, part of the Sec protein translocase complex. Interacts with the SecYEG preprotein conducting channel. Has a central role in coupling the hydrolysis of ATP to the transfer of proteins into and across the cell membrane, serving as an ATP-driven molecular motor driving the stepwise translocation of polypeptide chains across the membrane. This chain is Protein translocase subunit SecA 2, found in Listeria monocytogenes serotype 1/2a (strain 10403S).